The following is a 270-amino-acid chain: NAD kinase (270 aa).

The Proton acceptor role is filled by aspartate 49. NAD(+) contacts are provided by residues 49-50, arginine 54, 126-127, arginine 152, aspartate 154, 165-170, alanine 189, and glutamine 227; these read DG, NE, and TAYNKS.

This sequence belongs to the NAD kinase family. The cofactor is a divalent metal cation.

It is found in the cytoplasm. The enzyme catalyses NAD(+) + ATP = ADP + NADP(+) + H(+). Functionally, involved in the regulation of the intracellular balance of NAD and NADP, and is a key enzyme in the biosynthesis of NADP. Catalyzes specifically the phosphorylation on 2'-hydroxyl of the adenosine moiety of NAD to yield NADP. The protein is NAD kinase of Lactococcus lactis subsp. cremoris (strain MG1363).